The following is a 477-amino-acid chain: Argininosuccinate lyase (477 aa).

It belongs to the lyase 1 family. Argininosuccinate lyase subfamily.

Its subcellular location is the cytoplasm. It catalyses the reaction 2-(N(omega)-L-arginino)succinate = fumarate + L-arginine. The protein operates within amino-acid biosynthesis; L-arginine biosynthesis; L-arginine from L-ornithine and carbamoyl phosphate: step 3/3. This is Argininosuccinate lyase from Corynebacterium efficiens (strain DSM 44549 / YS-314 / AJ 12310 / JCM 11189 / NBRC 100395).